We begin with the raw amino-acid sequence, 123 residues long: WAP four-disulfide core domain protein 2 (123 aa).

The signal sequence occupies residues 1–26; sequence MPACRLGLLVASLLLGLLLGLPPVTG. 2 WAP domains span residues 28–69 and 72–122; these read GAEK…VTIC and PNEK…VTPV. Disulfide bonds link Cys-35–Cys-61, Cys-44–Cys-65, Cys-48–Cys-60, Cys-54–Cys-69, Cys-79–Cys-109, Cys-92–Cys-113, Cys-96–Cys-108, and Cys-102–Cys-118.

As to quaternary structure, homotrimer; disulfide-linked. Detected in the distal parts of the epididymis.

It localises to the secreted. In terms of biological role, broad range protease inhibitor. The protein is WAP four-disulfide core domain protein 2 (WFDC2) of Sus scrofa (Pig).